The chain runs to 375 residues: Phosphoglycerate kinase (375 aa).

Positions 1, 2, 3, 4, 17, 40, 41, 43, 44, 99, 100, 147, and 148 each coordinate (2R)-3-phosphoglycerate. Glycine 191 serves as a coordination point for ADP. A CDP-binding site is contributed by glycine 191. AMP contacts are provided by alanine 192 and lysine 193. ATP is bound at residue alanine 192. Alanine 192 contributes to the Mg(2+) binding site. Aspartate 196 lines the CDP pocket. Aspartate 196 serves as a coordination point for Mg(2+). Lysine 197 is an AMP binding site. Residue lysine 197 participates in ATP binding. ADP is bound at residue glycine 215. Residue glycine 215 coordinates CDP. 2 residues coordinate AMP: glycine 216 and glycine 290. 2 residues coordinate ATP: glycine 216 and glycine 290. CDP contacts are provided by glycine 315 and phenylalanine 320. Phenylalanine 320 is a binding site for ADP. Glutamate 321 is a binding site for AMP. Residues glutamate 321, aspartate 352, and threonine 353 each coordinate ATP. Aspartate 352 serves as a coordination point for Mg(2+).

This sequence belongs to the phosphoglycerate kinase family. In terms of assembly, monomer. Mg(2+) serves as cofactor.

The catalysed reaction is (2R)-3-phosphoglycerate + ATP = (2R)-3-phospho-glyceroyl phosphate + ADP. It functions in the pathway carbohydrate degradation; glycolysis; pyruvate from D-glyceraldehyde 3-phosphate: step 2/5. The sequence is that of Phosphoglycerate kinase (PGK) from Tetrahymena pyriformis.